Consider the following 79-residue polypeptide: Conotoxin VnMSGL-0122 (79 aa).

Residues 1–20 form the signal peptide; the sequence is MSGLGIMVLALLLLVFMATS. Residues 21–44 constitute a propeptide that is removed on maturation; that stretch reads HQDGGGKQATQRDAINVRRRRSIT. Disulfide bonds link C52–C64, C56–C73, and C63–C77. L78 bears the Leucine amide mark.

Belongs to the conotoxin O3 superfamily. In terms of tissue distribution, expressed by the venom duct.

The protein localises to the secreted. The polypeptide is Conotoxin VnMSGL-0122 (Conus ventricosus (Mediterranean cone)).